We begin with the raw amino-acid sequence, 612 residues long: Peroxisomal targeting signal receptor (612 aa).

Position 1 is an N-acetylmethionine (Met-1). The disordered stretch occupies residues 1-24 (MDVGSCSVGNNPLAQLHKHTQQNK). Cys-6 is covalently cross-linked (Glycyl cysteine thioester (Cys-Gly) (interchain with G-Cter in ubiquitin)). The tract at residues 7–29 (SVGNNPLAQLHKHTQQNKSLQFN) is amphipathic helix 1 (AH1). Residues Lys-18 and Lys-24 each participate in a glycyl lysine isopeptide (Lys-Gly) (interchain with G-Cter in ubiquitin) cross-link. Position 61 is a phosphoserine (Ser-61). A TPR 1 repeat occupies 64-97 (NMANMQRFINGEPLIDDKRRMEIGPSSGRLPPFS). The amphipathic helix 2 (AH2) stretch occupies residues 70 to 104 (RFINGEPLIDDKRRMEIGPSSGRLPPFSNVHSLQT). The WxxxF/Y motif 1 signature appears at 120–124 (WSQEF). A disordered region spans residues 129–151 (SIQNRNADTGNSEKAWQRGSTTA). An amphipathic helix 3 (AH3) region spans residues 158 to 174 (PNTMMNNYAYASMNSLS). The disordered stretch occupies residues 182-202 (AFMNQQQSGRSKEGVNEQEQQ). The WxxxF/Y motif 2 signature appears at 204–208 (WTDQF). The amphipathic helix 4 (AH4) stretch occupies residues 257 to 273 (FQEVWDSIHKDAEEVLP). TPR repeat units lie at residues 313–346 (PNAYKIGCLLMENGAKLSEAALAFEAAVKEKPDH), 347–380 (VDAWLRLGLVQTQNEKELNGISALEECLKLDPKN), 381–418 (LEAMKTLAISYINEGYDMSAFTMLDKWAETKYPEIWSR), 419–456 (IKQQDDKFQKEKGFTHIDMNAHITKQFLQLANNLSTID), 457–490 (PEIQLCLGLLFYTKDDFDKTIDCFESALRVNPND), 491–524 (ELMWNRLGASLANSNRSEEAIQAYHRALQLKPSF), and 525–558 (VRARYNLAVSSMNIGCFKEAAGYLLSVLSMHEVN).

The protein belongs to the peroxisomal targeting signal receptor family. Interacts (via WxxxF/Y and LVxEF motifs) with PEX14; promoting translocation through the PEX13-PEX14 docking complex. Post-translationally, monoubiquitinated at Cys-6 by PEX2 during PEX5 passage through the retrotranslocation channel: monoubiquitination acts as a signal for PEX5 extraction and is required for proper export from peroxisomes and recycling. Ubiquitination at Cys-6 is UBC4-independent but requires the presence of PEX4. When PEX5 recycling is compromised, polyubiquitinated at Lys-18 and Lys-24 by PEX10 during its passage through the retrotranslocation channel, leading to its degradation. Ubiquitination at Lys-18 and Lys-24 are UBC4-dependent. Monoubiquitination at Cys-6 and polyubiquitination at Lys-18 and Lys-24 are removed by UBP15 in the cytosol, resetting PEX5 for a subsequent import cycle.

It localises to the cytoplasm. It is found in the cytosol. The protein localises to the peroxisome matrix. Functionally, receptor that mediates peroxisomal import of proteins containing a C-terminal PTS1-type tripeptide peroxisomal targeting signal (SKL-type). Binds to cargo proteins containing a PTS1 peroxisomal targeting signal in the cytosol, and translocates them into the peroxisome matrix by passing through the PEX13-PEX14 docking complex along with cargo proteins. PEX5 receptor is then retrotranslocated into the cytosol, leading to release of bound cargo in the peroxisome matrix, and reset for a subsequent peroxisome import cycle. In Saccharomyces cerevisiae (strain ATCC 204508 / S288c) (Baker's yeast), this protein is Peroxisomal targeting signal receptor.